We begin with the raw amino-acid sequence, 396 residues long: Probable sugar efflux transporter (396 aa).

A run of 12 helical transmembrane segments spans residues 15–35 (VVTL…PVGL), 50–70 (VGIM…PFML), 81–101 (LICL…SWSF), 103–123 (VLVI…SITA), 136–156 (AQAL…GLPL), 170–190 (FFAI…LLPL), 209–229 (PALM…YTAY), 246–266 (FATA…VIFG), 275–295 (ALVS…LPAA), 299–319 (IHLG…GLGM), 333–353 (VAMA…ALVG), and 364–384 (MIGY…IIIF).

The protein belongs to the major facilitator superfamily. SotB (TC 2.A.1.2) family.

The protein localises to the cell inner membrane. In terms of biological role, involved in the efflux of sugars. The physiological role may be the reduction of the intracellular concentration of toxic sugars or sugar metabolites. This is Probable sugar efflux transporter from Escherichia coli O157:H7 (strain EC4115 / EHEC).